Consider the following 545-residue polypeptide: Chaperonin GroEL (545 aa).

ATP contacts are provided by residues 29-32, K50, 86-90, G415, and D495; these read TLGP and DGTTT.

This sequence belongs to the chaperonin (HSP60) family. As to quaternary structure, forms a cylinder of 14 subunits composed of two heptameric rings stacked back-to-back. Interacts with the co-chaperonin GroES.

The protein resides in the cytoplasm. It carries out the reaction ATP + H2O + a folded polypeptide = ADP + phosphate + an unfolded polypeptide.. Functionally, together with its co-chaperonin GroES, plays an essential role in assisting protein folding. The GroEL-GroES system forms a nano-cage that allows encapsulation of the non-native substrate proteins and provides a physical environment optimized to promote and accelerate protein folding. The sequence is that of Chaperonin GroEL from Phocaeicola vulgatus (strain ATCC 8482 / DSM 1447 / JCM 5826 / CCUG 4940 / NBRC 14291 / NCTC 11154) (Bacteroides vulgatus).